The chain runs to 573 residues: Diflavin flavoprotein A 1 (573 aa).

The tract at residues 43-236 is zinc metallo-hydrolase; the sequence is QNGTTYNSYL…GTISTVANGH (194 aa). Positions 92, 94, 96, 159, 178, and 236 each coordinate Fe cation. The Flavodoxin-like domain occupies 265 to 401; that stretch reads VVVFYVADYG…LCDESGTDLG (137 aa). The segment at 424-573 is flavodoxin-reductase-like; it reads IGRISGGLYI…VHHRKVGNYY (150 aa).

The protein in the N-terminal section; belongs to the zinc metallo-hydrolase group 3 family. It in the C-terminal section; belongs to the flavodoxin reductase family. Homodimer. The cofactor is Fe cation. FAD is required as a cofactor. It depends on FMN as a cofactor.

Its function is as follows. Mediates electron transfer from NADH to oxygen, reducing it to water. This modular protein has 3 redox cofactors, in other organisms the same activity requires 2 or 3 proteins. The sequence is that of Diflavin flavoprotein A 1 (dfa1) from Synechocystis sp. (strain ATCC 27184 / PCC 6803 / Kazusa).